A 332-amino-acid polypeptide reads, in one-letter code: 4-hydroxy-3-methylbut-2-enyl diphosphate reductase (332 aa).

C13 provides a ligand contact to [4Fe-4S] cluster. Positions 41 and 75 each coordinate (2E)-4-hydroxy-3-methylbut-2-enyl diphosphate. Residues H41 and H75 each coordinate dimethylallyl diphosphate. The isopentenyl diphosphate site is built by H41 and H75. Position 97 (C97) interacts with [4Fe-4S] cluster. H125 is a binding site for (2E)-4-hydroxy-3-methylbut-2-enyl diphosphate. H125 lines the dimethylallyl diphosphate pocket. An isopentenyl diphosphate-binding site is contributed by H125. E127 acts as the Proton donor in catalysis. T168 serves as a coordination point for (2E)-4-hydroxy-3-methylbut-2-enyl diphosphate. C229 serves as a coordination point for [4Fe-4S] cluster. (2E)-4-hydroxy-3-methylbut-2-enyl diphosphate-binding residues include S257, S258, N259, and S306. Dimethylallyl diphosphate contacts are provided by S257, S258, N259, and S306. Isopentenyl diphosphate contacts are provided by S257, S258, N259, and S306.

The protein belongs to the IspH family. [4Fe-4S] cluster serves as cofactor.

It carries out the reaction isopentenyl diphosphate + 2 oxidized [2Fe-2S]-[ferredoxin] + H2O = (2E)-4-hydroxy-3-methylbut-2-enyl diphosphate + 2 reduced [2Fe-2S]-[ferredoxin] + 2 H(+). The catalysed reaction is dimethylallyl diphosphate + 2 oxidized [2Fe-2S]-[ferredoxin] + H2O = (2E)-4-hydroxy-3-methylbut-2-enyl diphosphate + 2 reduced [2Fe-2S]-[ferredoxin] + 2 H(+). It participates in isoprenoid biosynthesis; dimethylallyl diphosphate biosynthesis; dimethylallyl diphosphate from (2E)-4-hydroxy-3-methylbutenyl diphosphate: step 1/1. The protein operates within isoprenoid biosynthesis; isopentenyl diphosphate biosynthesis via DXP pathway; isopentenyl diphosphate from 1-deoxy-D-xylulose 5-phosphate: step 6/6. Functionally, catalyzes the conversion of 1-hydroxy-2-methyl-2-(E)-butenyl 4-diphosphate (HMBPP) into a mixture of isopentenyl diphosphate (IPP) and dimethylallyl diphosphate (DMAPP). Acts in the terminal step of the DOXP/MEP pathway for isoprenoid precursor biosynthesis. This Chlorobaculum tepidum (strain ATCC 49652 / DSM 12025 / NBRC 103806 / TLS) (Chlorobium tepidum) protein is 4-hydroxy-3-methylbut-2-enyl diphosphate reductase.